The chain runs to 615 residues: Alpha-fetoprotein (615 aa).

The first 15 residues, 1-15, serve as a signal peptide directing secretion; the sequence is MAVLPLSGAIRLSRG. The Cell attachment site signature appears at 14–16; that stretch reads RGD. Albumin domains follow at residues 27-218, 223-415, and 416-609; these read WAKK…RRQA, KPIR…ELKK, and HIYE…VLVT. 2 cysteine pairs are disulfide-bonded: Cys-109/Cys-121 and Cys-120/Cys-131. 2 N-linked (GlcNAc...) asparagine glycosylation sites follow: Asn-137 and Asn-157. Cystine bridges form between Cys-155-Cys-200, Cys-199-Cys-213, Cys-236-Cys-282, Cys-281-Cys-289, Cys-301-Cys-315, Cys-314-Cys-325, Cys-396-Cys-405, Cys-428-Cys-458, and Cys-457-Cys-468. A Cell attachment site motif is present at residues 283–285; that stretch reads RGD. N-linked (GlcNAc...) asparagine glycosylation is present at Asn-472. Intrachain disulfides connect Cys-485-Cys-501, Cys-500-Cys-511, Cys-538-Cys-593, and Cys-592-Cys-601.

The protein belongs to the ALB/AFP/VDB family. In terms of assembly, dimeric and trimeric forms have been found in addition to the monomeric form. Post-translationally, sulfated.

The protein localises to the secreted. In terms of biological role, binds copper, nickel, and fatty acids as well as, and bilirubin less well than, serum albumin. The protein is Alpha-fetoprotein (AFP) of Gallus gallus (Chicken).